An 84-amino-acid chain; its full sequence is Large ribosomal subunit protein bL27 (84 aa).

Positions 1–22 (MAHKKGASSTRNGRDSNAQRLG) are disordered. The segment covering 7-19 (ASSTRNGRDSNAQ) has biased composition (polar residues).

Belongs to the bacterial ribosomal protein bL27 family.

The sequence is that of Large ribosomal subunit protein bL27 from Streptomyces avermitilis (strain ATCC 31267 / DSM 46492 / JCM 5070 / NBRC 14893 / NCIMB 12804 / NRRL 8165 / MA-4680).